The sequence spans 188 residues: Probable nicotinate-nucleotide adenylyltransferase (188 aa).

The protein belongs to the NadD family.

The catalysed reaction is nicotinate beta-D-ribonucleotide + ATP + H(+) = deamido-NAD(+) + diphosphate. It functions in the pathway cofactor biosynthesis; NAD(+) biosynthesis; deamido-NAD(+) from nicotinate D-ribonucleotide: step 1/1. Functionally, catalyzes the reversible adenylation of nicotinate mononucleotide (NaMN) to nicotinic acid adenine dinucleotide (NaAD). The polypeptide is Probable nicotinate-nucleotide adenylyltransferase (Rhizobium meliloti (strain 1021) (Ensifer meliloti)).